Reading from the N-terminus, the 80-residue chain is UPF0181 protein SG1330 (80 aa).

Residues 58-80 (TEVLETPAARAETDPYDSNPDDD) form a disordered region.

The protein belongs to the UPF0181 family.

This Sodalis glossinidius (strain morsitans) protein is UPF0181 protein SG1330.